We begin with the raw amino-acid sequence, 99 residues long: MPTFSREEIVHLGDLARIALTDEEITRLQGELNVIADSINKVQEVASDDVPPTANPVPLEAYLRPDVAETPLTQEEALAGGPKTEAGMFVAPRILGSEE.

This sequence belongs to the GatC family. Heterotrimer of A, B and C subunits.

It catalyses the reaction L-glutamyl-tRNA(Gln) + L-glutamine + ATP + H2O = L-glutaminyl-tRNA(Gln) + L-glutamate + ADP + phosphate + H(+). It carries out the reaction L-aspartyl-tRNA(Asn) + L-glutamine + ATP + H2O = L-asparaginyl-tRNA(Asn) + L-glutamate + ADP + phosphate + 2 H(+). Functionally, allows the formation of correctly charged Asn-tRNA(Asn) or Gln-tRNA(Gln) through the transamidation of misacylated Asp-tRNA(Asn) or Glu-tRNA(Gln) in organisms which lack either or both of asparaginyl-tRNA or glutaminyl-tRNA synthetases. The reaction takes place in the presence of glutamine and ATP through an activated phospho-Asp-tRNA(Asn) or phospho-Glu-tRNA(Gln). The protein is Aspartyl/glutamyl-tRNA(Asn/Gln) amidotransferase subunit C of Bifidobacterium longum (strain NCC 2705).